The primary structure comprises 48 residues: Large ribosomal subunit protein bL32 (48 aa).

The span at 1-20 shows a compositional bias: basic residues; that stretch reads MAVPKRRVSKTRAAKRRTHY. The interval 1 to 48 is disordered; it reads MAVPKRRVSKTRAAKRRTHYKVSLPIPVKDKDGSWKLPHRINTKTGEY.

This sequence belongs to the bacterial ribosomal protein bL32 family.

The polypeptide is Large ribosomal subunit protein bL32 (Campylobacter hominis (strain ATCC BAA-381 / DSM 21671 / CCUG 45161 / LMG 19568 / NCTC 13146 / CH001A)).